Consider the following 99-residue polypeptide: uncharacterized protein (99 aa).

This is an uncharacterized protein from Haemophilus influenzae (strain ATCC 51907 / DSM 11121 / KW20 / Rd).